Consider the following 89-residue polypeptide: Luqin-like RYamide peptides lury-1 (89 aa).

Residues 1 to 19 (MLTRVPVLILAVIVMLALC) form the signal peptide. A propeptide spanning residues 20 to 26 (QEPEKPE) is cleaved from the precursor. A tyrosine amide mark is found at Tyr35 and Tyr43. Positions 47–89 (SGNLMESSQNSLTEESSDVVCQLIDGKYICLPVDAVRFRPFFL) are excised as a propeptide.

In terms of tissue distribution, expressed in the M1 and M2 pharyngeal neurons from where the LURY-1-1 and LURY-1-2 peptides are secreted.

The protein resides in the secreted. Acts as a ligand for the npr-22 receptor and controls food-related processes including feeding, lifespan, egg-laying and roaming behavior. Secreted in the presence of food, leading to reduced feeding and roaming behavior and increased egg laying and lifespan. Activity may be latent under normal conditions but induced under conditions that cause hyperactivation of the pharynx such as abrupt refeeding after starvation. The chain is Luqin-like RYamide peptides lury-1 from Caenorhabditis elegans.